The chain runs to 121 residues: Basic phospholipase A2 homolog blK-PLA2 (121 aa).

Intrachain disulfides connect C26–C115, C28–C44, C43–C95, C49–C121, C50–C88, C57–C81, and C75–C86. The segment at 105–117 (KKYRYHLKPFCKK) is important for membrane-damaging activities in eukaryotes and bacteria; heparin-binding.

This sequence belongs to the phospholipase A2 family. Group II subfamily. K49 sub-subfamily. In terms of assembly, homodimer; non-covalently linked. In terms of tissue distribution, expressed by the venom gland.

It is found in the secreted. Functionally, snake venom phospholipase A2 (PLA2) homolog that lacks enzymatic activity. Shows myotoxic and edema-inducing activities in vivo. A model of myotoxic mechanism has been proposed: an apo Lys49-PLA2 is activated by the entrance of a hydrophobic molecule (e.g. fatty acid) at the hydrophobic channel of the protein leading to a reorientation of a monomer. This reorientation causes a transition between 'inactive' to 'active' states, causing alignment of C-terminal and membrane-docking sites (MDoS) side-by-side and putting the membrane-disruption sites (MDiS) in the same plane, exposed to solvent and in a symmetric position for both monomers. The MDoS region stabilizes the toxin on membrane by the interaction of charged residues with phospholipid head groups. Subsequently, the MDiS region destabilizes the membrane with penetration of hydrophobic residues. This insertion causes a disorganization of the membrane, allowing an uncontrolled influx of ions (i.e. calcium and sodium), and eventually triggering irreversible intracellular alterations and cell death. The polypeptide is Basic phospholipase A2 homolog blK-PLA2 (Bothrops leucurus (Whitetail lancehead)).